We begin with the raw amino-acid sequence, 172 residues long: Urease accessory protein UreE (172 aa).

It belongs to the UreE family.

It is found in the cytoplasm. Involved in urease metallocenter assembly. Binds nickel. Probably functions as a nickel donor during metallocenter assembly. The chain is Urease accessory protein UreE from Shewanella halifaxensis (strain HAW-EB4).